Here is a 680-residue protein sequence, read N- to C-terminus: Structure-specific endonuclease subunit SLX4 (680 aa).

Disordered regions lie at residues 15–92, 141–183, and 450–490; these read EVAK…EPVV, ESSS…STQQ, and LGSG…ATRL. Positions 22–33 are enriched in acidic residues; it reads DSDEPIIDEDDL. Residues 60–86 are compositionally biased toward basic and acidic residues; it reads NNSKDTFKETPLELVDKEEAIEDKAPN. The span at 156–174 shows a compositional bias: basic residues; it reads LKSKKITKPKLTKTSKRTK. Residues 473 to 490 show a composition bias toward polar residues; sequence TVISRSPQSTRTPQATRL.

The protein belongs to the SLX4 family. In terms of assembly, forms a heterodimer with SLX1. Phosphorylated in response to DNA damage.

It localises to the nucleus. Its function is as follows. Regulatory subunit of the SLX1-SLX4 structure-specific endonuclease that resolves DNA secondary structures generated during DNA repair and recombination. Has endonuclease activity towards branched DNA substrates, introducing single-strand cuts in duplex DNA close to junctions with ss-DNA. The sequence is that of Structure-specific endonuclease subunit SLX4 from Vanderwaltozyma polyspora (strain ATCC 22028 / DSM 70294 / BCRC 21397 / CBS 2163 / NBRC 10782 / NRRL Y-8283 / UCD 57-17) (Kluyveromyces polysporus).